The chain runs to 150 residues: Large ribosomal subunit protein uL15 (150 aa).

This sequence belongs to the universal ribosomal protein uL15 family. As to quaternary structure, part of the 50S ribosomal subunit.

Binds to the 23S rRNA. In Anaplasma marginale (strain Florida), this protein is Large ribosomal subunit protein uL15.